The following is a 175-amino-acid chain: PE-PGRS family protein PE_PGRS8 (175 aa).

A PE domain is found at 1–93; that stretch reads MSFVIAAPEA…AGSYAAAEAA (93 aa).

Belongs to the mycobacterial PE family. PGRS subfamily.

The protein resides in the secreted. It localises to the cell wall. Its subcellular location is the cell surface. This chain is PE-PGRS family protein PE_PGRS8, found in Mycobacterium tuberculosis (strain ATCC 25618 / H37Rv).